The sequence spans 179 residues: Pectinesterase inhibitor 5 (179 aa).

Residues 1-25 (MATMLINHMLFLTSLLIVVFPVANA) form the signal peptide. Disulfide bonds link cysteine 35–cysteine 44 and cysteine 101–cysteine 141.

This sequence belongs to the PMEI family. In terms of tissue distribution, expressed in seeds, buds, and mature flowers.

It localises to the secreted. It is found in the extracellular space. The protein localises to the apoplast. Its function is as follows. Pectin methylesterase (PME) inhibitor that targets PME from seeds and modulates PME activity and pectin methylesterification during seed germination. The polypeptide is Pectinesterase inhibitor 5 (Arabidopsis thaliana (Mouse-ear cress)).